We begin with the raw amino-acid sequence, 108 residues long: Replication restart protein PriB (108 aa).

The region spanning 8–108 is the SSB domain; the sequence is IDNRFSVMGV…LHAEQIEFID (101 aa).

The protein belongs to the PriB family. As to quaternary structure, homodimer. Interacts with PriA and DnaT. Component of the replication restart primosome. Primosome assembly occurs via a 'hand-off' mechanism. PriA binds to replication forks, subsequently PriB then DnaT bind; DnaT then displaces ssDNA to generate the helicase loading substrate.

In terms of biological role, involved in the restart of stalled replication forks, which reloads the replicative helicase on sites other than the origin of replication; the PriA-PriB pathway is the major replication restart pathway. During primosome assembly it facilitates complex formation between PriA and DnaT on DNA; stabilizes PriA on DNA. Stimulates the DNA unwinding activity of PriA helicase. In Haemophilus influenzae (strain 86-028NP), this protein is Replication restart protein PriB.